The primary structure comprises 64 residues: Protein DsrB (64 aa).

This sequence belongs to the DsrB family.

In Salmonella enteritidis PT4 (strain P125109), this protein is Protein DsrB.